Reading from the N-terminus, the 1758-residue chain is Y' element ATP-dependent helicase YIL177C (1758 aa).

One can recognise a Helicase ATP-binding domain in the interval 668–845; it reads EIYMADTPSV…LQRIGLTGLA (178 aa). 681–688 is a binding site for ATP; sequence APPGYGKT. The Helicase C-terminal domain maps to 900-1051; that stretch reads ALKLLLALFE…EFYGLESKKG (152 aa). The span at 1142 to 1360 shows a compositional bias: low complexity; it reads NVRTNATTNA…ATTTESTNAS (219 aa). The interval 1142 to 1384 is disordered; the sequence is NVRTNATTNA…RFHPVTDINK (243 aa). Over residues 1361–1384 the composition is skewed to basic and acidic residues; the sequence is AKEDANKDGNAEDNRFHPVTDINK.

This sequence belongs to the helicase family. Yeast subtelomeric Y' repeat subfamily.

Functionally, catalyzes DNA unwinding and is involved in telomerase-independent telomere maintenance. This Saccharomyces cerevisiae (strain ATCC 204508 / S288c) (Baker's yeast) protein is Y' element ATP-dependent helicase YIL177C.